The following is a 357-amino-acid chain: Elongation factor Ts (357 aa).

The involved in Mg(2+) ion dislocation from EF-Tu stretch occupies residues 82-85 (TDFV).

This sequence belongs to the EF-Ts family.

The protein resides in the cytoplasm. Functionally, associates with the EF-Tu.GDP complex and induces the exchange of GDP to GTP. It remains bound to the aminoacyl-tRNA.EF-Tu.GTP complex up to the GTP hydrolysis stage on the ribosome. In Campylobacter jejuni subsp. jejuni serotype O:6 (strain 81116 / NCTC 11828), this protein is Elongation factor Ts.